We begin with the raw amino-acid sequence, 347 residues long: GMP reductase (347 aa).

108–131 contacts NADP(+); it reads ADFQKTKDIMALTEDLIFICIDIA. The K(+) site is built by G181 and G183. The Thioimidate intermediate role is filled by C186. An NADP(+)-binding site is contributed by 216 to 239; it reads IIGDGGCSCAGDVSKAFGGGADFV.

Belongs to the IMPDH/GMPR family. GuaC type 1 subfamily. In terms of assembly, homotetramer.

It carries out the reaction IMP + NH4(+) + NADP(+) = GMP + NADPH + 2 H(+). Its function is as follows. Catalyzes the irreversible NADPH-dependent deamination of GMP to IMP. It functions in the conversion of nucleobase, nucleoside and nucleotide derivatives of G to A nucleotides, and in maintaining the intracellular balance of A and G nucleotides. The polypeptide is GMP reductase (Photobacterium profundum (strain SS9)).